The following is a 200-amino-acid chain: Ependymin-related protein 1 (200 aa).

The N-terminal stretch at 1-17 (MILQAALFLAGLTVVSG) is a signal peptide. Asn-36, Asn-124, and Asn-136 each carry an N-linked (GlcNAc...) asparagine glycan.

The protein belongs to the ependymin family. In terms of tissue distribution, component of the acid-soluble and acid-insoluble organic matrix of prismatic shell layers (at protein level). Expressed discontinuously in the anterior zone of the outer fold of the mantle where its expression correlates with shell pigmentation.

It localises to the secreted. The protein is Ependymin-related protein 1 of Haliotis asinina (Donkey's ear abalone).